The following is an 88-amino-acid chain: Outer membrane protein H.8 (88 aa).

Residues 1-17 (MKKSLFAAALLSLALAA) form the signal peptide. A lipid anchor (N-palmitoyl cysteine) is attached at C18. C18 carries S-diacylglycerol cysteine lipidation. Repeat copies occupy residues 23 to 27 (AAEAP), 28 to 32 (AAEAS), 33 to 37 (STEAP), 38 to 42 (AAEAP), 43 to 47 (AAEAP), 48 to 52 (AAEAA), 53 to 57 (AAEAP), 58 to 62 (AAEAP), 63 to 67 (AAEAP), 68 to 72 (AAEAA), 73 to 77 (ATEAP), 78 to 82 (AAEAP), and 83 to 87 (AAEAA). The 13 X 5 AA tandem repeats of [AS]-[AT]-E-A-[PAS] stretch occupies residues 23–87 (AAEAPAAEAS…AAEAPAAEAA (65 aa)). The segment at 23-88 (AAEAPAAEAS…AEAPAAEAAK (66 aa)) is disordered. The span at 25-88 (EAPAAEASST…AEAPAAEAAK (64 aa)) shows a compositional bias: low complexity.

It localises to the cell outer membrane. This is Outer membrane protein H.8 from Neisseria gonorrhoeae (strain ATCC 700825 / FA 1090).